The primary structure comprises 403 residues: S-adenosylmethionine synthase (403 aa).

His-15 lines the ATP pocket. Residue Asp-17 coordinates Mg(2+). K(+) is bound at residue Glu-43. Residues Glu-56 and Gln-99 each coordinate L-methionine. The flexible loop stretch occupies residues 99-109 (QSPDINQGVDR). ATP-binding positions include 166–168 (DAK), 232–233 (KF), Asp-241, 247–248 (RK), Ala-264, and Lys-268. Residue Asp-241 coordinates L-methionine. Lys-272 contacts L-methionine.

It belongs to the AdoMet synthase family. As to quaternary structure, homotetramer; dimer of dimers. Mg(2+) serves as cofactor. It depends on K(+) as a cofactor.

It localises to the cytoplasm. The catalysed reaction is L-methionine + ATP + H2O = S-adenosyl-L-methionine + phosphate + diphosphate. Its pathway is amino-acid biosynthesis; S-adenosyl-L-methionine biosynthesis; S-adenosyl-L-methionine from L-methionine: step 1/1. Functionally, catalyzes the formation of S-adenosylmethionine (AdoMet) from methionine and ATP. The overall synthetic reaction is composed of two sequential steps, AdoMet formation and the subsequent tripolyphosphate hydrolysis which occurs prior to release of AdoMet from the enzyme. This chain is S-adenosylmethionine synthase, found in Xylella fastidiosa (strain M12).